A 509-amino-acid polypeptide reads, in one-letter code: Otolin-1 (509 aa).

Positions 1-25 are cleaved as a signal peptide; that stretch reads MPSLRLLAILTTLLAVVLMATQSSA. The disordered stretch occupies residues 23–96; sequence SSATRTTRRP…AYSLSPTDST (74 aa). Residues 42–54 show a composition bias toward gly residues; sequence RGGGTGGGGGGGD. Residues 62 to 75 show a composition bias toward polar residues; sequence RQTTTTMSPSSSLG. The N-linked (GlcNAc...) asparagine glycan is linked to asparagine 121. The 52-residue stretch at 193 to 244 folds into the Collagen-like 1 domain; sequence GDKGDQGDTGMPGAPGILGKEGQKGDLGPKGEKGETGLPGLKGDLGERGKPG. The tract at residues 202–372 is disordered; that stretch reads GMPGAPGILG…GPKGPQGETA (171 aa). Residues 213–227 show a composition bias toward basic and acidic residues; it reads EGQKGDLGPKGEKGE. 2 N-linked (GlcNAc...) asparagine glycosylation sites follow: asparagine 246 and asparagine 311. The 45-residue stretch at 285–329 folds into the Collagen-like 2 domain; sequence GEKGEKGEAGLPGPPGPRGSVGPPGVNGSNGLPGPVGLRGQLGSP. Low complexity predominate over residues 302–322; sequence RGSVGPPGVNGSNGLPGPVGL. Residues 327-342 are compositionally biased toward gly residues; the sequence is GSPGGKGEAGGRGPPG. Residues 372 to 509 form the C1q domain; that stretch reads AEQIRSAFSV…GFLLYADPKA (138 aa). Asparagine 417 is a glycosylation site (N-linked (GlcNAc...) asparagine).

This sequence belongs to the OTOL1 family. Homooligomer; disulfide-linked; probably forms homotrimers. Interacts with otomp.

The protein localises to the secreted. Its subcellular location is the extracellular space. It localises to the extracellular matrix. In terms of biological role, collagen-like protein, which provides an organic scaffold for otoliths onto the sensory epithelium of the inner ear. Acts as a scaffold for biomineralization by sequestering calcium. This chain is Otolin-1 (Otol1), found in Oncorhynchus mykiss (Rainbow trout).